We begin with the raw amino-acid sequence, 449 residues long: 23S rRNA (uracil(1939)-C(5))-methyltransferase RlmD (449 aa).

The region spanning 1-66 (MGRSRHHNKL…AKFDEAKVVE (66 aa)) is the TRAM domain. Positions 79, 85, 88, and 169 each coordinate [4Fe-4S] cluster. Gln-280, Phe-309, Asn-314, Glu-330, Asn-357, and Asp-379 together coordinate S-adenosyl-L-methionine. Catalysis depends on Cys-405, which acts as the Nucleophile.

It belongs to the class I-like SAM-binding methyltransferase superfamily. RNA M5U methyltransferase family. RlmD subfamily.

It catalyses the reaction uridine(1939) in 23S rRNA + S-adenosyl-L-methionine = 5-methyluridine(1939) in 23S rRNA + S-adenosyl-L-homocysteine + H(+). Functionally, catalyzes the formation of 5-methyl-uridine at position 1939 (m5U1939) in 23S rRNA. This Francisella tularensis subsp. novicida (strain U112) protein is 23S rRNA (uracil(1939)-C(5))-methyltransferase RlmD.